Consider the following 330-residue polypeptide: Succinylglutamate desuccinylase (330 aa).

Zn(2+) contacts are provided by His53, Glu56, and His147. Glu210 is a catalytic residue.

This sequence belongs to the AspA/AstE family. Succinylglutamate desuccinylase subfamily. The cofactor is Zn(2+).

It catalyses the reaction N-succinyl-L-glutamate + H2O = L-glutamate + succinate. It functions in the pathway amino-acid degradation; L-arginine degradation via AST pathway; L-glutamate and succinate from L-arginine: step 5/5. In terms of biological role, transforms N(2)-succinylglutamate into succinate and glutamate. This Yersinia pseudotuberculosis serotype O:1b (strain IP 31758) protein is Succinylglutamate desuccinylase.